Reading from the N-terminus, the 732-residue chain is Coagulation factor XIII A chain (732 aa).

The tract at residues 1-27 (MSETSRTAFGGRRAVPPNNSNAAEDDL) is disordered. S2 carries the post-translational modification N-acetylserine. Residues 2–38 (SETSRTAFGGRRAVPPNNSNAAEDDLPTVELQGVVPR) constitute a propeptide, activation peptide. Residues C315, H374, and D397 contribute to the active site. Positions 437, 439, 486, and 491 each coordinate Ca(2+). An N-linked (GlcNAc...) asparagine glycan is attached at N614.

The protein belongs to the transglutaminase superfamily. Transglutaminase family. In terms of assembly, tetramer of two A chains (F13A1) and two B (F13B) chains. Ca(2+) serves as cofactor. The activation peptide is released by thrombin.

The protein resides in the cytoplasm. Its subcellular location is the secreted. The enzyme catalyses L-glutaminyl-[protein] + L-lysyl-[protein] = [protein]-L-lysyl-N(6)-5-L-glutamyl-[protein] + NH4(+). In terms of biological role, factor XIII is activated by thrombin and calcium ion to a transglutaminase that catalyzes the formation of gamma-glutamyl-epsilon-lysine cross-links between fibrin chains, thus stabilizing the fibrin clot. Also cross-link alpha-2-plasmin inhibitor, or fibronectin, to the alpha chains of fibrin. The sequence is that of Coagulation factor XIII A chain (F13A1) from Homo sapiens (Human).